A 553-amino-acid polypeptide reads, in one-letter code: Serine/threonine-protein phosphatase 2B catalytic subunit A1 (553 aa).

Ser-2 is subject to N-acetylserine. Fe cation-binding residues include Asp-119, His-121, and Asp-147. Zn(2+) contacts are provided by Asp-147 and Asn-179. His-180 acts as the Proton donor in catalysis. The Zn(2+) site is built by His-228 and His-317. The segment at 413–447 (LDPESEPKAAEETVKARANATKETGTPSDEKASSA) is disordered. Residues 417 to 427 (SEPKAAEETVK) are compositionally biased toward basic and acidic residues.

This sequence belongs to the PPP phosphatase family. PP-2B subfamily. Composed of two components (A and B), the A component is the catalytic subunit and the B component confers calcium sensitivity. Fe(3+) serves as cofactor. Requires Zn(2+) as cofactor.

The catalysed reaction is O-phospho-L-seryl-[protein] + H2O = L-seryl-[protein] + phosphate. The enzyme catalyses O-phospho-L-threonyl-[protein] + H2O = L-threonyl-[protein] + phosphate. Its function is as follows. Calcium-dependent, calmodulin-stimulated protein phosphatase. This subunit may have a role in the calmodulin activation of calcineurin. This Saccharomyces cerevisiae (strain ATCC 204508 / S288c) (Baker's yeast) protein is Serine/threonine-protein phosphatase 2B catalytic subunit A1 (CNA1).